The primary structure comprises 237 residues: Riboflavin kinase (237 aa).

The disordered stretch occupies residues 1–23; sequence MSLPNPDNRPLLIGPPTGPEAPF. Mg(2+)-binding residues include Thr46 and Asn48. The segment at 82 to 126 is disordered; it reads VLYQKPPTSEPVMMDPVQQQQQQQQQQRNQQQQQEGGVGSAQQEK. The segment covering 99-115 has biased composition (low complexity); it reads QQQQQQQQQQRNQQQQQ. The active-site Nucleophile is Glu158.

This sequence belongs to the flavokinase family. Zn(2+) serves as cofactor. Requires Mg(2+) as cofactor.

It catalyses the reaction riboflavin + ATP = FMN + ADP + H(+). It functions in the pathway cofactor biosynthesis; FMN biosynthesis; FMN from riboflavin (ATP route): step 1/1. Functionally, catalyzes the phosphorylation of riboflavin (vitamin B2) to form flavin mononucleotide (FMN) coenzyme. This is Riboflavin kinase (fmn1) from Neurospora crassa (strain ATCC 24698 / 74-OR23-1A / CBS 708.71 / DSM 1257 / FGSC 987).